Reading from the N-terminus, the 374-residue chain is tRNA-specific 2-thiouridylase MnmA (374 aa).

Residues 12–19 and M38 contribute to the ATP site; that span reads GMSGGVDS. The interaction with target base in tRNA stretch occupies residues 98-100; sequence NPD. C103 acts as the Nucleophile in catalysis. A disulfide bond links C103 and C200. G127 contributes to the ATP binding site. An interaction with tRNA region spans residues 150 to 152; it reads KDQ. The active-site Cysteine persulfide intermediate is C200. Residues 311–312 are interaction with tRNA; the sequence is RY.

The protein belongs to the MnmA/TRMU family.

It localises to the cytoplasm. It carries out the reaction S-sulfanyl-L-cysteinyl-[protein] + uridine(34) in tRNA + AH2 + ATP = 2-thiouridine(34) in tRNA + L-cysteinyl-[protein] + A + AMP + diphosphate + H(+). In terms of biological role, catalyzes the 2-thiolation of uridine at the wobble position (U34) of tRNA, leading to the formation of s(2)U34. In Lactiplantibacillus plantarum (strain ATCC BAA-793 / NCIMB 8826 / WCFS1) (Lactobacillus plantarum), this protein is tRNA-specific 2-thiouridylase MnmA.